The chain runs to 124 residues: Protein RibT (124 aa).

An N-acetyltransferase domain is found at 3-124 (IRYKKSFEKI…QQDQDISYNN (122 aa)).

Involved in riboflavin biosynthesis. The chain is Protein RibT (ribT) from Bacillus subtilis (strain 168).